The chain runs to 356 residues: Stomatin-like protein 2, mitochondrial (356 aa).

A mitochondrion-targeting transit peptide spans 1–28 (MLARAARGTGALLLKGSVQASARAPRRA). A Phosphoserine; by PKC/PRKCZ modification is found at S17. Y124 is subject to Phosphotyrosine. N6-acetyllysine; alternate is present on K145. K145 carries the N6-succinyllysine; alternate modification. Positions 215–252 (INVAEGKKQAQILASEAEKAEQINQAAGEASAVLAKAK) form a coiled coil. K233 is modified (N6-acetyllysine). The segment at 326–356 (EAQDSVSSRSSRDVRSTDASLDEELDRVKLS) is disordered. S330 is modified (phosphoserine).

This sequence belongs to the band 7/mec-2 family. Forms homooligomers. Interacts with MFN2; may form heterooligomers with this mediator of mitochondrial fusion. Interacts with PHB1 and PHB2; stabilizes and recruits them to cardiolipin-enriched mitochondrial membranes. Interacts with CACNA2D2.

Its subcellular location is the cell membrane. The protein resides in the mitochondrion. It localises to the mitochondrion inner membrane. The protein localises to the mitochondrion intermembrane space. It is found in the membrane raft. Its subcellular location is the cytoplasm. The protein resides in the cytoskeleton. Its function is as follows. Mitochondrial protein that probably regulates the biogenesis and the activity of mitochondria. Stimulates cardiolipin biosynthesis, binds cardiolipin-enriched membranes where it recruits and stabilizes some proteins including prohibitin and may therefore act in the organization of functional microdomains in mitochondrial membranes. Through regulation of the mitochondrial function may play a role into several biological processes including cell migration, cell proliferation, T-cell activation, calcium homeostasis and cellular response to stress. May play a role in calcium homeostasis through negative regulation of calcium efflux from mitochondria. Required for mitochondrial hyperfusion a pro-survival cellular response to stress which results in increased ATP production by mitochondria. May also regulate the organization of functional domains at the plasma membrane and play a role in T-cell activation through association with the T-cell receptor signaling complex and its regulation. This Bos taurus (Bovine) protein is Stomatin-like protein 2, mitochondrial (STOML2).